Consider the following 193-residue polypeptide: Xanthine phosphoribosyltransferase (193 aa).

The xanthine site is built by Leu20 and Asn27. 128 to 132 (ANGDA) contacts 5-phospho-alpha-D-ribose 1-diphosphate. Lys156 serves as a coordination point for xanthine.

This sequence belongs to the purine/pyrimidine phosphoribosyltransferase family. Xpt subfamily. Homodimer.

Its subcellular location is the cytoplasm. It catalyses the reaction XMP + diphosphate = xanthine + 5-phospho-alpha-D-ribose 1-diphosphate. It participates in purine metabolism; XMP biosynthesis via salvage pathway; XMP from xanthine: step 1/1. Functionally, converts the preformed base xanthine, a product of nucleic acid breakdown, to xanthosine 5'-monophosphate (XMP), so it can be reused for RNA or DNA synthesis. The chain is Xanthine phosphoribosyltransferase from Staphylococcus saprophyticus subsp. saprophyticus (strain ATCC 15305 / DSM 20229 / NCIMB 8711 / NCTC 7292 / S-41).